The following is a 316-amino-acid chain: Pantothenate kinase (316 aa).

99–106 (GSVAVGKS) contacts ATP.

This sequence belongs to the prokaryotic pantothenate kinase family.

The protein localises to the cytoplasm. It carries out the reaction (R)-pantothenate + ATP = (R)-4'-phosphopantothenate + ADP + H(+). Its pathway is cofactor biosynthesis; coenzyme A biosynthesis; CoA from (R)-pantothenate: step 1/5. This Pasteurella multocida (strain Pm70) protein is Pantothenate kinase (coaA).